We begin with the raw amino-acid sequence, 354 residues long: Rhodopsin (354 aa).

Residues 1–36 (MNGTEGPNFYIPMSNKTGVVRSPFEYPQYYLAEPWK) are Extracellular-facing. N-linked (GlcNAc...) asparagine glycans are attached at residues Asn2 and Asn15. The helical transmembrane segment at 37 to 61 (YSILAAYMFLLILLGFPINFMTLYV) threads the bilayer. The Cytoplasmic portion of the chain corresponds to 62–73 (TIQHKKLRTPLN). Residues 74–96 (YILLNLAFANHFMVLCGFTITLY) form a helical membrane-spanning segment. Residues 97–110 (TSLHGYFVFGQSGC) are Extracellular-facing. Cys110 and Cys187 are disulfide-bonded. Residues 111–133 (YFEGFFATLGGEIALWSLVALAI) traverse the membrane as a helical segment. The short motif at 134 to 136 (ERY) is the 'Ionic lock' involved in activated form stabilization element. The Cytoplasmic segment spans residues 134–152 (ERYIVVCKPMSNFRFGENH). The chain crosses the membrane as a helical span at residues 153–173 (AMMGVAFTWIMALACAVPPLF). The Extracellular portion of the chain corresponds to 174-202 (GWSRYIPEGMQCSCGVDYYTLKPEINNES). A helical transmembrane segment spans residues 203 to 224 (FVIYMFVVHFLIPLIIITFCYG). At 225–252 (RLVCTVKEAAAQQQESATTQKAEKEVTR) the chain is on the cytoplasmic side. The helical transmembrane segment at 253 to 274 (MVIIMVIFFLICWVPYAYVAFY) threads the bilayer. Residues 275–286 (IFCNQGSEFGPI) are Extracellular-facing. Residues 287–308 (FMTVPAFFAKSSAIYNPVIYIM) form a helical membrane-spanning segment. Lys296 carries the post-translational modification N6-(retinylidene)lysine. Residues 309-354 (LNKQFRNCMITTLCCGKNPFGDDDASSAATSKTEATSVSTSQVSPA) are Cytoplasmic-facing. Residues Cys322 and Cys323 are each lipidated (S-palmitoyl cysteine). The disordered stretch occupies residues 332–354 (DASSAATSKTEATSVSTSQVSPA). Low complexity predominate over residues 334–354 (SSAATSKTEATSVSTSQVSPA).

Belongs to the G-protein coupled receptor 1 family. Opsin subfamily. Post-translationally, contains one covalently linked retinal chromophore. Upon light absorption, the covalently bound 11-cis-retinal is converted to all-trans-retinal. After hydrolysis of the Schiff base and release of the covalently bound all-trans-retinal, active rhodopsin is regenerated by binding of a fresh molecule of 11-cis-retinal.

The protein localises to the membrane. The protein resides in the cell projection. It is found in the cilium. It localises to the photoreceptor outer segment. Its function is as follows. Photoreceptor required for image-forming vision at low light intensity. Required for photoreceptor cell viability after birth. Light-induced isomerization of 11-cis to all-trans retinal triggers a conformational change that activates signaling via G-proteins. Subsequent receptor phosphorylation mediates displacement of the bound G-protein alpha subunit by arrestin and terminates signaling. The protein is Rhodopsin (RHO) of Rana temporaria (European common frog).